Here is a 500-residue protein sequence, read N- to C-terminus: L-arabinose isomerase (500 aa).

E306, E333, H350, and H450 together coordinate Mn(2+).

This sequence belongs to the arabinose isomerase family. As to quaternary structure, homohexamer. Mn(2+) is required as a cofactor.

The enzyme catalyses beta-L-arabinopyranose = L-ribulose. Its pathway is carbohydrate degradation; L-arabinose degradation via L-ribulose; D-xylulose 5-phosphate from L-arabinose (bacterial route): step 1/3. In terms of biological role, catalyzes the conversion of L-arabinose to L-ribulose. This is L-arabinose isomerase from Yersinia pseudotuberculosis serotype I (strain IP32953).